We begin with the raw amino-acid sequence, 300 residues long: UDP-N-acetylenolpyruvoylglucosamine reductase (300 aa).

An FAD-binding PCMH-type domain is found at 28–190; the sequence is KIGGRVKYLV…TRAMMSFKKE (163 aa). Arg-169 is a catalytic residue. Ser-219 (proton donor) is an active-site residue. The active site involves Glu-290.

This sequence belongs to the MurB family. It depends on FAD as a cofactor.

The protein localises to the cytoplasm. The catalysed reaction is UDP-N-acetyl-alpha-D-muramate + NADP(+) = UDP-N-acetyl-3-O-(1-carboxyvinyl)-alpha-D-glucosamine + NADPH + H(+). It functions in the pathway cell wall biogenesis; peptidoglycan biosynthesis. Cell wall formation. The sequence is that of UDP-N-acetylenolpyruvoylglucosamine reductase from Thermotoga sp. (strain RQ2).